Here is a 157-residue protein sequence, read N- to C-terminus: 2-C-methyl-D-erythritol 2,4-cyclodiphosphate synthase (157 aa).

A divalent metal cation contacts are provided by Asp8 and His10. 4-CDP-2-C-methyl-D-erythritol 2-phosphate contacts are provided by residues 8–10 (DVH) and 34–35 (HS). His42 is a binding site for a divalent metal cation. Residues 56 to 58 (DIG), 61 to 65 (FPDTD), 100 to 106 (AQRPKMA), 132 to 135 (TTEE), and Phe139 each bind 4-CDP-2-C-methyl-D-erythritol 2-phosphate.

This sequence belongs to the IspF family. Homotrimer. A divalent metal cation is required as a cofactor.

The catalysed reaction is 4-CDP-2-C-methyl-D-erythritol 2-phosphate = 2-C-methyl-D-erythritol 2,4-cyclic diphosphate + CMP. It participates in isoprenoid biosynthesis; isopentenyl diphosphate biosynthesis via DXP pathway; isopentenyl diphosphate from 1-deoxy-D-xylulose 5-phosphate: step 4/6. In terms of biological role, involved in the biosynthesis of isopentenyl diphosphate (IPP) and dimethylallyl diphosphate (DMAPP), two major building blocks of isoprenoid compounds. Catalyzes the conversion of 4-diphosphocytidyl-2-C-methyl-D-erythritol 2-phosphate (CDP-ME2P) to 2-C-methyl-D-erythritol 2,4-cyclodiphosphate (ME-CPP) with a corresponding release of cytidine 5-monophosphate (CMP). The sequence is that of 2-C-methyl-D-erythritol 2,4-cyclodiphosphate synthase from Trichlorobacter lovleyi (strain ATCC BAA-1151 / DSM 17278 / SZ) (Geobacter lovleyi).